Consider the following 565-residue polypeptide: NAD-dependent malic enzyme (565 aa).

Residue Tyr104 is the Proton donor of the active site. Residue Arg157 coordinates NAD(+). The active-site Proton acceptor is Lys175. Residues Glu246, Asp247, and Asp270 each coordinate a divalent metal cation. NAD(+) contacts are provided by Asp270 and Asn418.

Belongs to the malic enzymes family. Homotetramer. The cofactor is Mg(2+). Requires Mn(2+) as cofactor.

It carries out the reaction (S)-malate + NAD(+) = pyruvate + CO2 + NADH. The catalysed reaction is oxaloacetate + H(+) = pyruvate + CO2. In Klebsiella pneumoniae (strain 342), this protein is NAD-dependent malic enzyme.